Consider the following 104-residue polypeptide: Large ribosomal subunit protein uL24 (104 aa).

Belongs to the universal ribosomal protein uL24 family. As to quaternary structure, part of the 50S ribosomal subunit.

Functionally, one of two assembly initiator proteins, it binds directly to the 5'-end of the 23S rRNA, where it nucleates assembly of the 50S subunit. Its function is as follows. One of the proteins that surrounds the polypeptide exit tunnel on the outside of the subunit. This chain is Large ribosomal subunit protein uL24, found in Buchnera aphidicola subsp. Baizongia pistaciae (strain Bp).